Here is a 145-residue protein sequence, read N- to C-terminus: D-aminoacyl-tRNA deacylase (145 aa).

The Gly-cisPro motif, important for rejection of L-amino acids motif lies at 133–134; that stretch reads GP.

This sequence belongs to the DTD family. Homodimer.

The protein resides in the cytoplasm. It carries out the reaction glycyl-tRNA(Ala) + H2O = tRNA(Ala) + glycine + H(+). The catalysed reaction is a D-aminoacyl-tRNA + H2O = a tRNA + a D-alpha-amino acid + H(+). An aminoacyl-tRNA editing enzyme that deacylates mischarged D-aminoacyl-tRNAs. Also deacylates mischarged glycyl-tRNA(Ala), protecting cells against glycine mischarging by AlaRS. Acts via tRNA-based rather than protein-based catalysis; rejects L-amino acids rather than detecting D-amino acids in the active site. By recycling D-aminoacyl-tRNA to D-amino acids and free tRNA molecules, this enzyme counteracts the toxicity associated with the formation of D-aminoacyl-tRNA entities in vivo and helps enforce protein L-homochirality. This chain is D-aminoacyl-tRNA deacylase, found in Cutibacterium acnes (strain DSM 16379 / KPA171202) (Propionibacterium acnes).